The sequence spans 406 residues: Glycosylated lysosomal membrane protein (406 aa).

Positions M1 to G35 are cleaved as a signal peptide. The Lumenal portion of the chain corresponds to E36 to G372. Residues N65, N134, N159, N187, and N230 are each glycosylated (N-linked (GlcNAc...) asparagine). A helical membrane pass occupies residues I373–L393. At L394–N406 the chain is on the cytoplasmic side. The Lysosomal targeting motif signature appears at Y402–N406.

It belongs to the GLMP family. Interacts (via lumenal domain) with lysosomal protein MFSD1; the interaction starts while both proteins are still in the endoplasmic reticulum and is required for stabilization of MFSD1 in lysosomes but has no direct effect on its targeting to lysosomes or transporter activity. In terms of processing, highly N-glycosylated. N-glycosylation is essential for GLMP stability and for MFSD1 lysosomal localization.

It localises to the lysosome membrane. In terms of biological role, required to protect lysosomal transporter MFSD1 from lysosomal proteolysis and for MFSD1 lysosomal localization. The protein is Glycosylated lysosomal membrane protein of Homo sapiens (Human).